A 300-amino-acid chain; its full sequence is Solute carrier family 25 member 35 (300 aa).

Solcar repeat units lie at residues 1–90, 100–193, and 203–294; these read MDFL…AESR, HSPV…IKDL, and QSWK…LRSF. 6 helical membrane passes run 38–58, 59–79, 91–119, 169–190, 205–225, and 277–300; these read TYQRHYRNVFHAFFTIGKVDG, LAALQKGLGPALLYQFLMNGI, GYLHTNEGTHSPVRSAAAGALAGVMGAYL, AVGGLPRVVIGSSTQLCTFSSI, WKVALAAAMVSGVAIVVAMTP, and LGPHTILSLFFWDQLRSFYNTYAK.

This sequence belongs to the mitochondrial carrier (TC 2.A.29) family.

It is found in the mitochondrion inner membrane. It carries out the reaction a dicarboxylate(in) + sulfate(out) = a dicarboxylate(out) + sulfate(in). In terms of biological role, putative antiporter that exchanges dicarboxylates and sulfur oxoanions across the inner membrane of mitochondria. The protein is Solute carrier family 25 member 35 (Slc25a35) of Mus musculus (Mouse).